The following is a 145-amino-acid chain: Major pollen allergen Ole e 1 (145 aa).

Disulfide bonds link cysteine 19/cysteine 90, cysteine 22/cysteine 131, and cysteine 43/cysteine 78. Asparagine 111 is a glycosylation site (N-linked (GlcNAc...) (complex) asparagine; alternate). N-linked (GlcNAc...) (high mannose) asparagine; alternate glycosylation is present at asparagine 111.

The protein belongs to the Ole e I family. In terms of processing, N-glycosylated; contains high mannose (Man(7)-GlcNAc) and partially fucosylated complex glycans (GlcNAc-Man(3)-Xyl-GlcNAc). Complex glycans may contribute to the antigenicity. Exists both in a glycosylated and in a non-glycosylated form. Ole e 1 and Ole e 1.0103 are the only non-glycosylated isoallergens. A second potential glycosylation site exists at position 50 in cv. Bella de Espana and cv. Hojiblanca. As to expression, expressed in tapetum and pollen grains. Not detected in petals, roots or leaves.

It localises to the endoplasmic reticulum. The protein resides in the secreted. Its function is as follows. May be involved in recognition between pollen-stigma and pollen tube-style cells. This Olea europaea (Common olive) protein is Major pollen allergen Ole e 1.